The primary structure comprises 473 residues: Cysteine protease ATG4A (473 aa).

The segment at 1–33 (MTSLPGRGVSPSSSDPLCEGNAAPSSSSSGQDL) is disordered. C160 acts as the Nucleophile in catalysis. Catalysis depends on residues D357 and H359.

This sequence belongs to the peptidase C54 family. Interacts with ATG8.

It localises to the cytoplasm. The enzyme catalyses [protein]-C-terminal L-amino acid-glycyl-phosphatidylethanolamide + H2O = [protein]-C-terminal L-amino acid-glycine + a 1,2-diacyl-sn-glycero-3-phosphoethanolamine. Its function is as follows. Cysteine protease that plays a key role in autophagy by mediating both proteolytic activation and delipidation of ATG8 family proteins. The protease activity is required for proteolytic activation of ATG8 family proteins: cleaves the C-terminal amino acid of ATG8 proteins to reveal a C-terminal glycine. Exposure of the glycine at the C-terminus is essential for ATG8 proteins conjugation to phosphatidylethanolamine (PE) and insertion to membranes, which is necessary for autophagy. In addition to the protease activity, also mediates delipidation of PE-conjugated ATG8 proteins. This chain is Cysteine protease ATG4A (ATG4A), found in Oryza sativa subsp. indica (Rice).